The sequence spans 405 residues: Acetate kinase (405 aa).

A Mg(2+)-binding site is contributed by Asn7. Position 14 (Lys14) interacts with ATP. A substrate-binding site is contributed by Arg98. Asp155 acts as the Proton donor/acceptor in catalysis. Residues 215-219, 289-291, and 337-341 contribute to the ATP site; these read HLGNG, DMR, and GIGEN. Glu391 is a Mg(2+) binding site.

This sequence belongs to the acetokinase family. As to quaternary structure, homodimer. Mg(2+) is required as a cofactor. It depends on Mn(2+) as a cofactor.

Its subcellular location is the cytoplasm. It catalyses the reaction acetate + ATP = acetyl phosphate + ADP. It functions in the pathway metabolic intermediate biosynthesis; acetyl-CoA biosynthesis; acetyl-CoA from acetate: step 1/2. Its function is as follows. Catalyzes the formation of acetyl phosphate from acetate and ATP. Can also catalyze the reverse reaction. The sequence is that of Acetate kinase from Desulfotalea psychrophila (strain LSv54 / DSM 12343).